A 901-amino-acid polypeptide reads, in one-letter code: Cyanophycin synthetase (901 aa).

Positions 224-478 (KRILAASGVP…VAGAVMDMLF (255 aa)) constitute an ATP-grasp domain. 493–499 (GTNGKTT) serves as a coordination point for ATP.

The protein in the C-terminal section; belongs to the MurCDEF family. In terms of assembly, homodimer.

It catalyses the reaction [L-4-(L-arginin-2-N-yl)aspartate](n) + L-aspartate + ATP = [L-4-(L-arginin-2-N-yl)aspartate](n)-L-aspartate + ADP + phosphate + H(+). The catalysed reaction is [L-4-(L-arginin-2-N-yl)aspartate](n)-L-aspartate + L-arginine + ATP = [L-4-(L-arginin-2-N-yl)aspartate](n+1) + ADP + phosphate + H(+). Catalyzes the ATP-dependent polymerization of arginine and aspartate to multi-L-arginyl-poly-L-aspartic acid (cyanophycin; a water-insoluble reserve polymer). In Trichormus variabilis (strain ATCC 29413 / PCC 7937) (Anabaena variabilis), this protein is Cyanophycin synthetase (cphA).